A 1048-amino-acid chain; its full sequence is Probable inactive receptor kinase At5g10020 (1048 aa).

The signal sequence occupies residues 1-21 (MSHFLTFCFLSLLLLLHGANA). LRR repeat units lie at residues 100-120 (RLRN…PSLG), 124-146 (SLQH…ISEL), 148-169 (SLNH…GFRN), 172-194 (QLRS…FTEL), 196-217 (NVEF…PMEN), 224-246 (TLRH…ESIG), 250-272 (NLEI…GSQP), 273-294 (SLRI…ELLQ), 298-319 (PLLE…INSS), 320-342 (TLTM…FKSC), 365-387 (TPDV…TSAF), 389-411 (RLSV…WGDS), 412-433 (QFSV…SFFT), 436-457 (SLRS…RGSR), 469-491 (QMEL…IGTM), 493-516 (KIKV…NKLS), 517-539 (GLLF…LPSQ), and 540-560 (MVGF…DLRS). Residues 602-622 (IAIIVASVGAAIMILFVLFAY) form a helical membrane-spanning segment. The interval 696 to 733 (EQGAPATSAPTNLLDDYPAASGRKSSSGGSPLSSSPRF) is disordered. Over residues 716-733 (SGRKSSSGGSPLSSSPRF) the composition is skewed to low complexity. Phosphoserine is present on serine 744. The Protein kinase domain maps to 768 to 1045 (RAPAEVLGRS…IRQVLDHLTS (278 aa)). ATP contacts are provided by residues 774–782 (LGRSSHGTL) and lysine 796.

It belongs to the protein kinase superfamily.

Its subcellular location is the membrane. The chain is Probable inactive receptor kinase At5g10020 from Arabidopsis thaliana (Mouse-ear cress).